The sequence spans 771 residues: DNA helicase/primase complex-associated protein (771 aa).

It belongs to the herpesviridae HEPA family. As to quaternary structure, associates with the primase and the helicase to form the helicase-primase complex. Interacts with the origin-binding protein. Interacts with the polymerase catalytic subunit.

It localises to the host nucleus. In terms of biological role, component of the helicase/primase complex. Unwinds the DNA at the replication forks and generates single-stranded DNA for both leading and lagging strand synthesis. The primase synthesizes short RNA primers on the lagging strand that the polymerase presumably elongates using dNTPs. The primase-associated factor has no known catalytic activity in the complex and may serve to facilitate the formation of the replisome by directly interacting with the origin-binding protein and the polymerase. This Homo sapiens (Human) protein is DNA helicase/primase complex-associated protein.